The chain runs to 341 residues: Anthranilate phosphoribosyltransferase (341 aa).

5-phospho-alpha-D-ribose 1-diphosphate is bound by residues Gly81, 84-85, Thr89, 91-94, 109-117, and Ser121; these read GD, NIST, and KHGSRSVSG. An anthranilate-binding site is contributed by Gly81. Ser93 contacts Mg(2+). Arg167 is a binding site for anthranilate. The Mg(2+) site is built by Asp226 and Glu227.

The protein belongs to the anthranilate phosphoribosyltransferase family. In terms of assembly, homodimer. Mg(2+) serves as cofactor.

The enzyme catalyses N-(5-phospho-beta-D-ribosyl)anthranilate + diphosphate = 5-phospho-alpha-D-ribose 1-diphosphate + anthranilate. It participates in amino-acid biosynthesis; L-tryptophan biosynthesis; L-tryptophan from chorismate: step 2/5. In terms of biological role, catalyzes the transfer of the phosphoribosyl group of 5-phosphorylribose-1-pyrophosphate (PRPP) to anthranilate to yield N-(5'-phosphoribosyl)-anthranilate (PRA). This Methylococcus capsulatus (strain ATCC 33009 / NCIMB 11132 / Bath) protein is Anthranilate phosphoribosyltransferase.